A 353-amino-acid chain; its full sequence is DNA integrity scanning protein DisA (353 aa).

The DAC domain occupies 6–144; that stretch reads DKELMNILKI…GGIKYVLRDS (139 aa). Residues Gly73, Leu91, and 104-108 each bind ATP; that span reads TRHRT.

This sequence belongs to the DisA family. In terms of assembly, homooctamer. Mg(2+) serves as cofactor.

It catalyses the reaction 2 ATP = 3',3'-c-di-AMP + 2 diphosphate. In terms of biological role, participates in a DNA-damage check-point that is active prior to asymmetric division when DNA is damaged. DisA forms globular foci that rapidly scan along the chromosomes during sporulation, searching for lesions. When a lesion is present, DisA pauses at the lesion site. This triggers a cellular response that culminates in a temporary block in sporulation initiation. Functionally, also has diadenylate cyclase activity, catalyzing the condensation of 2 ATP molecules into cyclic di-AMP (c-di-AMP). c-di-AMP acts as a signaling molecule that couples DNA integrity with progression of sporulation. The rise in c-di-AMP level generated by DisA while scanning the chromosome, operates as a positive signal that advances sporulation; upon encountering a lesion, the DisA focus arrests at the damaged site and halts c-di-AMP synthesis. In Clostridium botulinum (strain Loch Maree / Type A3), this protein is DNA integrity scanning protein DisA.